Here is a 532-residue protein sequence, read N- to C-terminus: Intercellular adhesion molecule 1 (532 aa).

The N-terminal stretch at 1–27 is a signal peptide; the sequence is MAPSSPRPALPALLVLLGALFPGPGNA. Residues 28–480 lie on the Extracellular side of the membrane; it reads QTSVSPPKVI…TVNVLSPRYE (453 aa). Ig-like C2-type domains lie at 41–103 and 128–193; these read GGSV…QSTA and GKDL…LDLR. 3 cysteine pairs are disulfide-bonded: Cys48–Cys92, Cys52–Cys96, and Cys135–Cys186. Residue Asn145 is glycosylated (N-linked (GlcNAc...) asparagine). The Cell attachment site; atypical motif lies at 152–154; sequence RGE. N-linked (GlcNAc...) asparagine glycosylation is found at Asn183, Asn202, Asn267, and Asn296. 2 Ig-like C2-type domains span residues 230-297 and 325-378; these read DTQG…LGNQ and GTEV…LEVA. An intrachain disulfide couples Cys237 to Cys290. Cys332 and Cys371 are disulfide-bonded. N-linked (GlcNAc...) asparagine glycosylation is found at Asn385 and Asn406. 3 disulfides stabilise this stretch: Cys403/Cys419, Cys419/Cys457, and Cys431/Cys457. An Ig-like C2-type 5 domain is found at 412 to 464; that stretch reads NSQQTPMCQASGNPLPELKCLKDGTFPLPVGESVTVTRDLEGTYLCRARSTQG. A helical membrane pass occupies residues 481–503; sequence IVIITVVAAAVIMGTAGLSTYLY. Over 504–532 the chain is Cytoplasmic; that stretch reads NRQRKIRKYRLQQAQKGTPMKPNTQATPP. A phosphothreonine mark is found at Thr521 and Thr530.

The protein belongs to the immunoglobulin superfamily. ICAM family. Homodimer. Interacts with MUC1 and promotes cell aggregation in epithelial cells. Interacts with ARHGEF26/SGEF. Interacts (on T cell side) with CD81, CD247 and CD9 at immunological synapses between antigen-presenting cells and T cells. Monoubiquitinated, which is promoted by MARCH9 and leads to endocytosis.

It localises to the membrane. In terms of biological role, ICAM proteins are ligands for the leukocyte adhesion protein LFA-1 (integrin alpha-L/beta-2). During leukocyte trans-endothelial migration, ICAM1 engagement promotes the assembly of endothelial apical cups through ARHGEF26/SGEF and RHOG activation. This Pan paniscus (Pygmy chimpanzee) protein is Intercellular adhesion molecule 1 (ICAM1).